Reading from the N-terminus, the 223-residue chain is Ribonuclease 3 (223 aa).

Residues Leu3–Gly125 enclose the RNase III domain. Glu38 lines the Mg(2+) pocket. Residue Asp42 is part of the active site. Mg(2+)-binding residues include Asp111 and Glu114. Residue Glu114 is part of the active site. One can recognise a DRBM domain in the interval Asp152–Thr222.

Belongs to the ribonuclease III family. As to quaternary structure, homodimer. The cofactor is Mg(2+).

It localises to the cytoplasm. It carries out the reaction Endonucleolytic cleavage to 5'-phosphomonoester.. In terms of biological role, digests double-stranded RNA. Involved in the processing of primary rRNA transcript to yield the immediate precursors to the large and small rRNAs (23S and 16S). Processes some mRNAs, and tRNAs when they are encoded in the rRNA operon. Processes pre-crRNA and tracrRNA of type II CRISPR loci if present in the organism. This is Ribonuclease 3 from Actinobacillus pleuropneumoniae serotype 3 (strain JL03).